Reading from the N-terminus, the 364-residue chain is Dihydroorotate dehydrogenase (quinone) (364 aa).

FMN is bound by residues 78 to 82 (AGFDK) and T102. Residue K82 coordinates substrate. 127–131 (NRMGF) is a substrate binding site. Residues N156 and N189 each coordinate FMN. N189 contacts substrate. S192 (nucleophile) is an active-site residue. N194 provides a ligand contact to substrate. FMN contacts are provided by K227 and T255. 256–257 (NT) is a substrate binding site. FMN contacts are provided by residues G285, G314, and 335-336 (YT).

It belongs to the dihydroorotate dehydrogenase family. Type 2 subfamily. As to quaternary structure, monomer. FMN is required as a cofactor.

The protein resides in the cell membrane. The catalysed reaction is (S)-dihydroorotate + a quinone = orotate + a quinol. It participates in pyrimidine metabolism; UMP biosynthesis via de novo pathway; orotate from (S)-dihydroorotate (quinone route): step 1/1. Catalyzes the conversion of dihydroorotate to orotate with quinone as electron acceptor. The chain is Dihydroorotate dehydrogenase (quinone) from Thermosynechococcus vestitus (strain NIES-2133 / IAM M-273 / BP-1).